Reading from the N-terminus, the 338-residue chain is Glycerol-3-phosphate dehydrogenase [NAD(P)+] (338 aa).

3 residues coordinate NADPH: S13, W14, and K108. Positions 108, 139, and 141 each coordinate sn-glycerol 3-phosphate. A143 is a binding site for NADPH. Residues K194, D247, S257, R258, and N259 each coordinate sn-glycerol 3-phosphate. K194 acts as the Proton acceptor in catalysis. R258 provides a ligand contact to NADPH. Positions 282 and 284 each coordinate NADPH.

It belongs to the NAD-dependent glycerol-3-phosphate dehydrogenase family.

The protein localises to the cytoplasm. The catalysed reaction is sn-glycerol 3-phosphate + NAD(+) = dihydroxyacetone phosphate + NADH + H(+). It catalyses the reaction sn-glycerol 3-phosphate + NADP(+) = dihydroxyacetone phosphate + NADPH + H(+). It participates in membrane lipid metabolism; glycerophospholipid metabolism. Catalyzes the reduction of the glycolytic intermediate dihydroxyacetone phosphate (DHAP) to sn-glycerol 3-phosphate (G3P), the key precursor for phospholipid synthesis. The sequence is that of Glycerol-3-phosphate dehydrogenase [NAD(P)+] from Streptococcus agalactiae serotype V (strain ATCC BAA-611 / 2603 V/R).